Consider the following 162-residue polypeptide: Protein NrdI (162 aa).

This sequence belongs to the NrdI family.

Probably involved in ribonucleotide reductase function. The sequence is that of Protein NrdI from Streptococcus pyogenes serotype M28 (strain MGAS6180).